Reading from the N-terminus, the 507-residue chain is Cytochrome P450 4X1 (507 aa).

The chain crosses the membrane as a helical span at residues 14–34 (LHLALVFCLALVLMQAVKLYL). C452 serves as a coordination point for heme.

The protein belongs to the cytochrome P450 family. The cofactor is heme. Expressed at high levels in brain, mainly in neurons in different regions, including brain stem, hippocampus, cortex and cerebellum. Also expressed in cerebral vasculature. Not detected in kidney, nor liver.

The protein resides in the endoplasmic reticulum membrane. It is found in the microsome membrane. The catalysed reaction is N-(5Z,8Z,11Z,14Z-eicosatetraenoyl)-ethanolamine + reduced [NADPH--hemoprotein reductase] + O2 = N-(14,15-epoxy-5Z,8Z,11Z-eicosatrienoyl)-ethanolamine + oxidized [NADPH--hemoprotein reductase] + H2O + H(+). Functionally, a cytochrome P450 monooxygenase that selectively catalyzes the epoxidation of the last double bond of the arachidonoyl moiety of anandamide, potentially modulating endocannabinoid signaling. Has no hydroxylase activity toward various fatty acids, steroids and prostaglandins. Mechanistically, uses molecular oxygen inserting one oxygen atom into a substrate, and reducing the second into a water molecule, with two electrons provided by NADPH via cytochrome P450 reductase (CPR; NADPH-ferrihemoprotein reductase). The polypeptide is Cytochrome P450 4X1 (Rattus norvegicus (Rat)).